A 769-amino-acid chain; its full sequence is Bifunctional glycosyltransferase pgtA (769 aa).

An N-acetylgalactosamine 3-beta-galactosyltransferase region spans residues 25-210; the sequence is YQGINNLIIS…SVIFKRSIFT (186 aa). Low complexity predominate over residues 410-441; the sequence is NNINNNNNNNNNNNNNNNNNNNNNNNNNNNNN. Residues 410 to 442 form a disordered region; sequence NNINNNNNNNNNNNNNNNNNNNNNNNNNNNNNS. Positions 442-769 are alpha-1,2-fucosyltransferase; the sequence is SILNFISGIN…SVHIGELFIS (328 aa).

It belongs to the glycosyltransferase 2 family.

It catalyses the reaction an N-acetyl-beta-D-glucosaminyl derivative + UDP-alpha-D-galactose = a beta-D-galactosyl-(1-&gt;3)-N-acetyl-beta-D-glucosaminyl derivative + UDP + H(+). The catalysed reaction is a beta-D-galactosyl-(1-&gt;3)-N-acetyl-beta-D-glucosaminyl derivative + GDP-beta-L-fucose = an alpha-L-Fuc-(1-&gt;2)-beta-D-Gal-(1-&gt;3)-beta-D-GlcNAc derivative + GDP + H(+). Bifunctional protein composed of 2 glycosyltransferase domains involved in glycosylating skp1. The N-terminal part catalyzes the transfer of a galactose residue to GlcNAc-skp1 in a beta 1-3 linkage. The C-terminal part catalyzes the transfer of a fucose residue to Gal-GlcNAc-skp1 in an alpha 1-2 linkage. This chain is Bifunctional glycosyltransferase pgtA (pgtA), found in Dictyostelium discoideum (Social amoeba).